A 344-amino-acid polypeptide reads, in one-letter code: Heat-inducible transcription repressor HrcA (344 aa).

The protein belongs to the HrcA family.

Negative regulator of class I heat shock genes (grpE-dnaK-dnaJ and groELS operons). Prevents heat-shock induction of these operons. This chain is Heat-inducible transcription repressor HrcA, found in Moorella thermoacetica (strain ATCC 39073 / JCM 9320).